The sequence spans 200 residues: Nucleoside triphosphate pyrophosphatase (200 aa).

Asp-79 (proton acceptor) is an active-site residue.

Belongs to the Maf family. A divalent metal cation serves as cofactor.

It localises to the cytoplasm. The catalysed reaction is a ribonucleoside 5'-triphosphate + H2O = a ribonucleoside 5'-phosphate + diphosphate + H(+). The enzyme catalyses a 2'-deoxyribonucleoside 5'-triphosphate + H2O = a 2'-deoxyribonucleoside 5'-phosphate + diphosphate + H(+). In terms of biological role, nucleoside triphosphate pyrophosphatase. May have a dual role in cell division arrest and in preventing the incorporation of modified nucleotides into cellular nucleic acids. This is Nucleoside triphosphate pyrophosphatase from Legionella pneumophila subsp. pneumophila (strain Philadelphia 1 / ATCC 33152 / DSM 7513).